The sequence spans 256 residues: Major prion protein (256 aa).

The signal sequence occupies residues 1 to 24; it reads MVKSHIGSWILVLFVAMWSDVGLC. An interaction with GRB2, ERI3 and SYN1 region spans residues 25–233; sequence KKRPKPGGGW…ESQAYYQRGA (209 aa). Residues 28–110 form a disordered region; that stretch reads PKPGGGWNTG…QWNKPSKPKT (83 aa). A run of 5 repeats spans residues 54–62, 63–70, 71–78, 79–86, and 87–95. Residues 54 to 95 form a 5 X 8 AA tandem repeats of P-H-G-G-G-W-G-Q region; sequence PQGGGGWGQPHGGGWGQPHGGGWGQPHGGGWGQPHGGGGWGQ. Over residues 55–97 the composition is skewed to gly residues; it reads QGGGGWGQPHGGGWGQPHGGGWGQPHGGGWGQPHGGGGWGQGG. Residues His-64, Gly-65, Gly-66, His-72, Gly-73, Gly-74, His-80, Gly-81, Gly-82, His-88, Gly-90, and Gly-91 each coordinate Cu(2+). A disulfide bond links Cys-182 and Cys-217. Residues Asn-184 and Asn-200 are each glycosylated (N-linked (GlcNAc...) (complex) asparagine). Ala-233 carries the GPI-anchor amidated alanine lipid modification. Positions 234 to 256 are cleaved as a propeptide — removed in mature form; it reads SVILFSSPPVILLISFLIFLIVG.

This sequence belongs to the prion family. Monomer and homodimer. Has a tendency to aggregate into amyloid fibrils containing a cross-beta spine, formed by a steric zipper of superposed beta-strands. Soluble oligomers may represent an intermediate stage on the path to fibril formation. Copper binding may promote oligomerization. Interacts with GRB2, APP, ERI3/PRNPIP and SYN1. Mislocalized cytosolically exposed PrP interacts with MGRN1; this interaction alters MGRN1 subcellular location and causes lysosomal enlargement. Interacts with KIAA1191.

It localises to the cell membrane. It is found in the golgi apparatus. In terms of biological role, its primary physiological function is unclear. Has cytoprotective activity against internal or environmental stresses. May play a role in neuronal development and synaptic plasticity. May be required for neuronal myelin sheath maintenance. May play a role in iron uptake and iron homeostasis. Soluble oligomers are toxic to cultured neuroblastoma cells and induce apoptosis (in vitro). Association with GPC1 (via its heparan sulfate chains) targets PRNP to lipid rafts. Also provides Cu(2+) or Zn(2+) for the ascorbate-mediated GPC1 deaminase degradation of its heparan sulfate side chains. This chain is Major prion protein (PRNP), found in Ovis aries (Sheep).